The following is a 275-amino-acid chain: NH(3)-dependent NAD(+) synthetase (275 aa).

50-57 is a binding site for ATP; the sequence is GISGGVDS. Position 56 (aspartate 56) interacts with Mg(2+). Residue arginine 147 participates in deamido-NAD(+) binding. Threonine 167 contributes to the ATP binding site. Glutamate 172 contributes to the Mg(2+) binding site. Residues lysine 180 and aspartate 187 each contribute to the deamido-NAD(+) site. Lysine 196 and threonine 218 together coordinate ATP. 267–268 provides a ligand contact to deamido-NAD(+); the sequence is HK.

It belongs to the NAD synthetase family. As to quaternary structure, homodimer.

It carries out the reaction deamido-NAD(+) + NH4(+) + ATP = AMP + diphosphate + NAD(+) + H(+). It participates in cofactor biosynthesis; NAD(+) biosynthesis; NAD(+) from deamido-NAD(+) (ammonia route): step 1/1. Functionally, catalyzes the ATP-dependent amidation of deamido-NAD to form NAD. Uses ammonia as a nitrogen source. The polypeptide is NH(3)-dependent NAD(+) synthetase (Pseudomonas syringae pv. syringae (strain B728a)).